The primary structure comprises 160 residues: Small ribosomal subunit protein uS7 (160 aa).

The protein belongs to the universal ribosomal protein uS7 family. In terms of assembly, part of the 30S ribosomal subunit. Contacts proteins S9 and S11.

Its function is as follows. One of the primary rRNA binding proteins, it binds directly to 16S rRNA where it nucleates assembly of the head domain of the 30S subunit. Is located at the subunit interface close to the decoding center, probably blocks exit of the E-site tRNA. This Anaplasma marginale (strain Florida) protein is Small ribosomal subunit protein uS7.